A 456-amino-acid polypeptide reads, in one-letter code: Keratin, type I cytoskeletal 12 (456 aa).

The segment covering 1 to 19 has biased composition (polar residues); it reads MSLSVRTSALSRRSSSQNG. The disordered stretch occupies residues 1-25; the sequence is MSLSVRTSALSRRSSSQNGVAGRPW. The interval 1–114 is head; the sequence is MSLSVRTSAL…GNDGGLLSGS (114 aa). The interval 115–150 is coil 1A; that stretch reads EKETMQNLNDRLASYLGKVRALEEANAELENKIREW. The 288-residue stretch at 115-402 folds into the IF rod domain; that stretch reads EKETMQNLND…RLLEGDTQGD (288 aa). The interval 154–171 is linker 1; the sequence is RRTGDSGSQSDYSKYYPL. Positions 172-263 are coil 1B; that stretch reads IEDLKNKIIS…KNHEEELQSF (92 aa). Residues 264 to 286 are linker 12; it reads QAGGPGEVNVEMDAAPGVDLTKS. Residues 287-397 form a coil 2 region; sequence GELRKEINSN…IETYRRLLEG (111 aa). The segment at 398–456 is tail; the sequence is DTQGDGFDESLSLTVSKPQAPSVDSSKDPNKTRKIKTVVQEIVNGEVVSSQVQELEEAM. Residues 405-430 form a disordered region; sequence DESLSLTVSKPQAPSVDSSKDPNKTR. A compositionally biased stretch (polar residues) spans 408–421; it reads LSLTVSKPQAPSVD.

It belongs to the intermediate filament family. As to quaternary structure, heterotetramer of two type I and two type II keratins. Keratin-3 associates with keratin-12.

Its function is as follows. Involved in corneal epithelium organization, integrity and corneal keratin expression. The sequence is that of Keratin, type I cytoskeletal 12 from Rattus norvegicus (Rat).